The sequence spans 184 residues: Putative manganese efflux pump MntP (184 aa).

Transmembrane regions (helical) follow at residues 12 to 32 (SIMA…MGMI), 39 to 59 (IIYI…FGML), 63 to 83 (LLSG…LLVL), 99 to 119 (FIAP…LDSF), 132 to 152 (VWMT…LGLL), and 164 to 184 (YSGA…LFPL).

The protein belongs to the MntP (TC 9.B.29) family.

The protein localises to the cell membrane. In terms of biological role, probably functions as a manganese efflux pump. The chain is Putative manganese efflux pump MntP from Bacillus pumilus (strain SAFR-032).